Here is a 93-residue protein sequence, read N- to C-terminus: Small ribosomal subunit protein uS19 (93 aa).

Belongs to the universal ribosomal protein uS19 family.

Its function is as follows. Protein S19 forms a complex with S13 that binds strongly to the 16S ribosomal RNA. The sequence is that of Small ribosomal subunit protein uS19 from Rubrobacter xylanophilus (strain DSM 9941 / JCM 11954 / NBRC 16129 / PRD-1).